Here is a 634-residue protein sequence, read N- to C-terminus: RING finger protein 207 (634 aa).

An RING-type zinc finger spans residues 25 to 64; sequence CPLCHVQYERPCLLDCFHDFCAGCLRGRATDGRLTCPLCQ. The B box-type; atypical zinc-finger motif lies at 93–145; sequence VEAVRCANCDLECSEQDVETTYFCNTCGQPLCARCRDETHRARMFARHDIVAL. Residues Cys98, Cys101, Cys127, and His132 each coordinate Zn(2+). 2 coiled-coil regions span residues 422-457 and 494-518; these read EHCRHYEDSYRHLQAEMQSLKDQVQELHRDLTKHHS and EIWEEAYQRVANEQEIYEAQLHDLL. The disordered stretch occupies residues 552–634; that stretch reads FQAPVDEQSE…DVPTWREHPT (83 aa).

Interacts with the core-glycosylated, but not the fully glycosylated form of KCNH2/HERG. Interacts with DNAJA1 and HSPA8. Interacts (via the C-terminus) with HSPA1A; this interaction additively increases KCNH2 expression.

The protein localises to the cytoplasm. In terms of biological role, plays a role in cardiac repolarization possibly by stabilizing membrane expression of the potassium channel KCNH2/HERG, or by assisting its synthesis, folding or export from the endoplasmic reticulum, in a heat shock protein-dependent manner. The protein is RING finger protein 207 (RNF207) of Homo sapiens (Human).